Consider the following 540-residue polypeptide: ADP,ATP carrier protein 2 (540 aa).

Helical transmembrane passes span 23–43 (FSKF…YALL), 61–81 (VIPF…TMIY), 93–113 (VFIS…TVIY), 150–170 (LYYV…FWGV), 185–205 (ALIN…SLWL), 222–242 (EVLL…LYLY), 292–312 (LLGI…FEVV), 334–354 (ITTL…GQTI), 361–381 (IGAL…FGAI), 389–409 (MIFG…LGGV), 455–475 (SGGS…AASL), and 477–497 (AITI…AWLG).

The protein belongs to the ADP/ATP translocase tlc family.

The protein localises to the cell membrane. In Chlamydia trachomatis serovar D (strain ATCC VR-885 / DSM 19411 / UW-3/Cx), this protein is ADP,ATP carrier protein 2 (tlcB).